A 387-amino-acid polypeptide reads, in one-letter code: S-adenosylmethionine synthase (387 aa).

An ATP-binding site is contributed by H15. Mg(2+) is bound at residue D17. E43 provides a ligand contact to K(+). L-methionine-binding residues include E56 and Q99. The tract at residues Q99 to N109 is flexible loop. ATP-binding positions include D166 to K168, R232 to F233, D241, R247 to K248, A264, and K268. D241 serves as a coordination point for L-methionine. K272 contacts L-methionine.

It belongs to the AdoMet synthase family. As to quaternary structure, homotetramer; dimer of dimers. It depends on Mg(2+) as a cofactor. K(+) serves as cofactor.

It localises to the cytoplasm. The catalysed reaction is L-methionine + ATP + H2O = S-adenosyl-L-methionine + phosphate + diphosphate. It functions in the pathway amino-acid biosynthesis; S-adenosyl-L-methionine biosynthesis; S-adenosyl-L-methionine from L-methionine: step 1/1. Catalyzes the formation of S-adenosylmethionine (AdoMet) from methionine and ATP. The overall synthetic reaction is composed of two sequential steps, AdoMet formation and the subsequent tripolyphosphate hydrolysis which occurs prior to release of AdoMet from the enzyme. This Methylobacillus flagellatus (strain ATCC 51484 / DSM 6875 / VKM B-1610 / KT) protein is S-adenosylmethionine synthase.